The sequence spans 247 residues: LHFPL tetraspan subfamily member 4 protein (247 aa).

The next 4 membrane-spanning stretches (helical) occupy residues 22–42 (IGVL…VVFI), 97–117 (FFVL…ALFF), 127–147 (ICAW…MIFP), and 178–198 (ILAI…FVLG).

The protein belongs to the LHFP family. Interacts with GABA(A) receptor subunits. Interacts with GABRB3. Interacts with GABRA2. Interacts with GABRG2. Identified in a complex of 720 kDa composed of LHFPL4, NLGN2, GABRA1, GABRB2, GABRG2 and GABRB3. Interacts with GABRA1. Interacts with NLGN2; leading to mutual regulation of protein level and synaptic clustering.

It is found in the cell projection. The protein localises to the dendrite. Its subcellular location is the postsynaptic cell membrane. In terms of biological role, plays a role in the regulation of inhibitory synapse formation and function by being involved in maintening gamma-aminobutyric acid receptors (GABAARs) clustering and their associated scaffold proteins at inhibitory synaptic sites. Acts in concert with NLGN2 to recruit or stabilize GABAARs. This is LHFPL tetraspan subfamily member 4 protein from Bos taurus (Bovine).